Consider the following 270-residue polypeptide: Phosphatidylglycerol--prolipoprotein diacylglyceryl transferase (270 aa).

The next 3 membrane-spanning stretches (helical) occupy residues 17–37, 63–83, and 95–115; these read LAIH…MFLG, ILFL…CLFY, and IFYI…VIAS. A 1,2-diacyl-sn-glycero-3-phospho-(1'-sn-glycerol) is bound at residue Arg-146. 3 helical membrane-spanning segments follow: residues 182-202, 209-229, and 243-263; these read SQVY…WLYA, GEVA…AEYF, and MSMG…LWVW.

The protein belongs to the Lgt family.

The protein resides in the cell inner membrane. It catalyses the reaction L-cysteinyl-[prolipoprotein] + a 1,2-diacyl-sn-glycero-3-phospho-(1'-sn-glycerol) = an S-1,2-diacyl-sn-glyceryl-L-cysteinyl-[prolipoprotein] + sn-glycerol 1-phosphate + H(+). It participates in protein modification; lipoprotein biosynthesis (diacylglyceryl transfer). Its function is as follows. Catalyzes the transfer of the diacylglyceryl group from phosphatidylglycerol to the sulfhydryl group of the N-terminal cysteine of a prolipoprotein, the first step in the formation of mature lipoproteins. This chain is Phosphatidylglycerol--prolipoprotein diacylglyceryl transferase, found in Paracidovorax citrulli (strain AAC00-1) (Acidovorax citrulli).